We begin with the raw amino-acid sequence, 51 residues long: Large ribosomal subunit protein bL33 (51 aa).

This sequence belongs to the bacterial ribosomal protein bL33 family.

This Hahella chejuensis (strain KCTC 2396) protein is Large ribosomal subunit protein bL33.